The chain runs to 127 residues: Flagellar hook-basal body complex protein FliE (127 aa).

This sequence belongs to the FliE family.

Its subcellular location is the bacterial flagellum basal body. The protein is Flagellar hook-basal body complex protein FliE of Leptospira interrogans serogroup Icterohaemorrhagiae serovar copenhageni (strain Fiocruz L1-130).